The following is a 479-amino-acid chain: Chromosomal replication initiator protein DnaA (479 aa).

A domain I, interacts with DnaA modulators region spans residues 1-71; the sequence is MNLTQIWKAT…RNALARVVGY (71 aa). Residues 71-138 are domain II; it reads YPVQVQVLIA…LDLASAMRSG (68 aa). A compositionally biased stretch (polar residues) spans 86-99; sequence TEPSPSLTLSNGSR. The interval 86-106 is disordered; sequence TEPSPSLTLSNGSRLMSDPEP. Positions 139 to 355 are domain III, AAA+ region; the sequence is MLNPRYTFSS…GSLNRVAAYA (217 aa). ATP contacts are provided by Gly183, Gly185, Lys186, and Thr187. Positions 356-479 are domain IV, binds dsDNA; sequence ELNRAPITIE…IRERIQMLRG (124 aa).

Belongs to the DnaA family. In terms of assembly, oligomerizes as a right-handed, spiral filament on DNA at oriC.

It is found in the cytoplasm. In terms of biological role, plays an essential role in the initiation and regulation of chromosomal replication. ATP-DnaA binds to the origin of replication (oriC) to initiate formation of the DNA replication initiation complex once per cell cycle. Binds the DnaA box (a 9 base pair repeat at the origin) and separates the double-stranded (ds)DNA. Forms a right-handed helical filament on oriC DNA; dsDNA binds to the exterior of the filament while single-stranded (ss)DNA is stabiized in the filament's interior. The ATP-DnaA-oriC complex binds and stabilizes one strand of the AT-rich DNA unwinding element (DUE), permitting loading of DNA polymerase. After initiation quickly degrades to an ADP-DnaA complex that is not apt for DNA replication. Binds acidic phospholipids. This chain is Chromosomal replication initiator protein DnaA, found in Chloroflexus aurantiacus (strain ATCC 29366 / DSM 635 / J-10-fl).